Here is a 151-residue protein sequence, read N- to C-terminus: UPF0208 membrane protein YfbV (151 aa).

Residues 1–45 (MSTPDNRSVNFFSLFCRGQHYSKTWPLEKRLAPVFVENRVIKMTR) are Cytoplasmic-facing. The chain crosses the membrane as a helical span at residues 46–65 (YAIRFMPPIAVFTLCWQIAL). The Periplasmic portion of the chain corresponds to 66-68 (GGQ). A helical transmembrane segment spans residues 69–91 (LGPAVATALFALSLPMQGLWWLG). Topologically, residues 92–151 (KRSVTPLPPAILNWFYEVRGKLQESGQVLAPVEGKPDYQALADTLKRAFKQLDKTFLDDL) are cytoplasmic.

Belongs to the UPF0208 family.

The protein resides in the cell inner membrane. This chain is UPF0208 membrane protein YfbV (yfbV), found in Escherichia coli O6:H1 (strain CFT073 / ATCC 700928 / UPEC).